We begin with the raw amino-acid sequence, 131 residues long: Phosphoribosyl-AMP cyclohydrolase (131 aa).

D80 is a binding site for Mg(2+). C81 lines the Zn(2+) pocket. Mg(2+)-binding residues include D82 and D84. The Zn(2+) site is built by C98 and C105.

The protein belongs to the PRA-CH family. Homodimer. Mg(2+) serves as cofactor. The cofactor is Zn(2+).

It localises to the cytoplasm. The enzyme catalyses 1-(5-phospho-beta-D-ribosyl)-5'-AMP + H2O = 1-(5-phospho-beta-D-ribosyl)-5-[(5-phospho-beta-D-ribosylamino)methylideneamino]imidazole-4-carboxamide. The protein operates within amino-acid biosynthesis; L-histidine biosynthesis; L-histidine from 5-phospho-alpha-D-ribose 1-diphosphate: step 3/9. Its function is as follows. Catalyzes the hydrolysis of the adenine ring of phosphoribosyl-AMP. The polypeptide is Phosphoribosyl-AMP cyclohydrolase (Azoarcus sp. (strain BH72)).